Consider the following 445-residue polypeptide: Probable D-serine dehydratase (445 aa).

Lysine 111 is modified (N6-(pyridoxal phosphate)lysine).

It belongs to the serine/threonine dehydratase family. DsdA subfamily. Requires pyridoxal 5'-phosphate as cofactor.

It catalyses the reaction D-serine = pyruvate + NH4(+). The sequence is that of Probable D-serine dehydratase from Burkholderia pseudomallei (strain 1710b).